Here is a 358-residue protein sequence, read N- to C-terminus: Stearoyl-CoA desaturase 2 (358 aa).

Residues 1–71 lie on the Cytoplasmic side of the membrane; sequence MPAHILQEIS…EGPPPKLEYV (71 aa). The tract at residues 16–39 is disordered; the sequence is TTTITAPPSGGQQNGGEKFEKSSH. A helical transmembrane segment spans residues 72 to 92; sequence WRNIILMALLHLGALYGITLV. Asn74 contributes to the substrate binding site. The Lumenal segment spans residues 93–96; the sequence is PSCK. Residues 97 to 117 traverse the membrane as a helical segment; it reads LYTCLFAYLYYVISALGITAG. Residues 118 to 216 lie on the Cytoplasmic side of the membrane; it reads AHRLWSHRTY…EKLVMFQRRY (99 aa). His119 and His124 together coordinate Fe cation. The Histidine box-1 signature appears at 119–124; the sequence is HRLWSH. Positions 147, 154, and 155 each coordinate substrate. Fe cation is bound by residues His156, His159, and His160. The Histidine box-2 signature appears at 156 to 160; sequence HRAHH. The substrate site is built by Arg187 and Lys188. The chain crosses the membrane as a helical span at residues 217-236; that stretch reads YKPGLLLMCFVLPTLVPWYC. Residues 237–240 lie on the Lumenal side of the membrane; the sequence is WGET. The helical transmembrane segment at 241–262 threads the bilayer; it reads FVNSLCVSTFLRYAVVLNATWL. Trp261 contacts substrate. Residues 263 to 358 lie on the Cytoplasmic side of the membrane; sequence VNSAAHLYGY…RTGDGSCKSG (96 aa). His268, His297, His300, and His301 together coordinate Fe cation. The Histidine box-3 motif lies at 297–301; that stretch reads HNYHH.

The protein belongs to the fatty acid desaturase type 1 family. Requires Fe(2+) as cofactor. Detected in brain and skin. Highly expressed in brain, and detected at low levels in heart, stomach, lung and testis. Detected both in dermis and epidermis.

It localises to the endoplasmic reticulum membrane. The protein localises to the microsome membrane. The catalysed reaction is octadecanoyl-CoA + 2 Fe(II)-[cytochrome b5] + O2 + 2 H(+) = (9Z)-octadecenoyl-CoA + 2 Fe(III)-[cytochrome b5] + 2 H2O. It carries out the reaction hexadecanoyl-CoA + 2 Fe(II)-[cytochrome b5] + O2 + 2 H(+) = (9Z)-hexadecenoyl-CoA + 2 Fe(III)-[cytochrome b5] + 2 H2O. In terms of biological role, stearoyl-CoA desaturase that utilizes O(2) and electrons from reduced cytochrome b5 to introduce the first double bond into saturated fatty acyl-CoA substrates. Catalyzes the insertion of a cis double bond at the delta-9 position into fatty acyl-CoA substrates including palmitoyl-CoA and stearoyl-CoA. Gives rise to a mixture of 16:1 and 18:1 unsaturated fatty acids. Contributes to the biosynthesis of membrane phospholipids, cholesterol esters and triglycerides, especially during embryonic development and in neonates. Important for normal permeability barrier function of the skin in neonates. This is Stearoyl-CoA desaturase 2 (Scd2) from Mus musculus (Mouse).